A 374-amino-acid chain; its full sequence is Ras-related GTP-binding protein B (374 aa).

M1 bears the N-acetylmethionine mark. A compositionally biased stretch (basic and acidic residues) spans 1 to 15; that stretch reads MEESDSEKKTEKENV. The tract at residues 1–30 is disordered; that stretch reads MEESDSEKKTEKENVGPKVEPPLGEPEGSL. Residues S49 and G50 each contribute to the GTP site. The GDP site is built by G50, S51, G52, K53, T54, S55, T69, and T75. The GTP site is built by G52, K53, T54, S55, T69, T75, G126, and H188. 2 residues coordinate GDP: H188 and D191. A Glycyl lysine isopeptide (Lys-Gly) (interchain with G-Cter in ubiquitin) cross-link involves residue K203. L209 and I225 together coordinate GDP. I225 serves as a coordination point for GTP. Residues K281, K291, and K305 each participate in a glycyl lysine isopeptide (Lys-Gly) (interchain with G-Cter in ubiquitin) cross-link.

The protein belongs to the GTR/RAG GTP-binding protein family. In terms of assembly, interacts with RRAGC and RRAGD; heterodimerization stabilizes RRAG proteins. The GTP-bound form of RRAGB (in complex with the GDP-bound form of RRAGC or RRAGD) interacts with RPTOR, thereby promoting recruitment of mTORC1 to the lysosomes. Component of the lysosomal folliculin complex (LFC), composed of FLCN, FNIP1 (or FNIP2), RagA/RRAGA or RagB/RRAGB GDP-bound, RagC/RRAGC or RagD/RRAGD GTP-bound, and Ragulator. Interacts with SH3BP4; the interaction with this negative regulator is most probably direct, preferentially occurs with the inactive GDP-bound form of RRAGB, is negatively regulated by amino acids and prevents interaction with RPTOR. Interacts with the GATOR1 complex; inactivates RRAGB. The Rag heterodimer interacts with SLC38A9; the probable amino acid sensor. Interacts with SESN1, SESN2 and SESN3.

The protein localises to the cytoplasm. It is found in the lysosome membrane. It catalyses the reaction GTP + H2O = GDP + phosphate + H(+). Its activity is regulated as follows. The activation of GTP-binding proteins is generally mediated by a guanine exchange factor (GEF), while inactivation through hydrolysis of bound GTP is catalyzed by a GTPase activating protein (GAP). The Ragulator complex functions as a GEF and promotes the active GTP-bound form. The GATOR1 complex functions as a GAP and stimulates RRAGB GTPase activity to turn it into its inactive GDP-bound form, preventing mTORC1 recruitment and activation. Guanine nucleotide-binding protein that plays a crucial role in the cellular response to amino acid availability through regulation of the mTORC1 signaling cascade. Forms heterodimeric Rag complexes with RagC/RRAGC or RagD/RRAGD and cycles between an inactive GDP-bound and an active GTP-bound form: RagB/RRAGB is in its active form when GTP-bound RagB/RRAGB forms a complex with GDP-bound RagC/RRAGC (or RagD/RRAGD) and in an inactive form when GDP-bound RagB/RRAGB heterodimerizes with GTP-bound RagC/RRAGC (or RagD/RRAGD). In its GTP-bound active form, promotes the recruitment of mTORC1 to the lysosomes and its subsequent activation by the GTPase RHEB. Involved in the RCC1/Ran-GTPase pathway. The sequence is that of Ras-related GTP-binding protein B from Mus musculus (Mouse).